Reading from the N-terminus, the 326-residue chain is GATA zinc finger domain-containing protein 21 (326 aa).

2 disordered regions span residues 1–102 and 145–238; these read MFRN…NNNN and QNQS…TPER. Low complexity-rich tracts occupy residues 17–102 and 148–164; these read NTNL…NNNN and SSSS…GSSA. Over residues 165–189 the composition is skewed to polar residues; it reads LNSINNNNYSPTTSSLNRVRNQYNQ. The span at 193–218 shows a compositional bias: acidic residues; sequence DEEDDDYDNGAEDGFDYDGDDNEDGS. The segment at 239 to 266 adopts a GATA-type zinc-finger fold; it reads CSNCKITHSSYWRRITVNGQKLDFCNAC. The disordered stretch occupies residues 277-326; it reads IKESKQRHSIQNIMNQNQEEEEEEREEEEEEEEEEDEEFETLEEEEEDDE. A compositionally biased stretch (acidic residues) spans 294–326; sequence QEEEEEEREEEEEEEEEEDEEFETLEEEEEDDE.

The polypeptide is GATA zinc finger domain-containing protein 21 (gtaU) (Dictyostelium discoideum (Social amoeba)).